Reading from the N-terminus, the 131-residue chain is Profilin-4 (131 aa).

A disulfide bond links C13 and C115. The short motif at 81 to 97 (AVIRGKKGAGGITVKKT) is the Involved in PIP2 interaction element. T111 bears the Phosphothreonine mark.

This sequence belongs to the profilin family. As to quaternary structure, occurs in many kinds of cells as a complex with monomeric actin in a 1:1 ratio. In terms of processing, phosphorylated by MAP kinases.

The protein localises to the cytoplasm. Its subcellular location is the cytoskeleton. Its function is as follows. Binds to actin and affects the structure of the cytoskeleton. At high concentrations, profilin prevents the polymerization of actin, whereas it enhances it at low concentrations. In Olea europaea (Common olive), this protein is Profilin-4.